The following is a 365-amino-acid chain: Succinyl-diaminopimelate desuccinylase (365 aa).

H65 provides a ligand contact to Zn(2+). Residue D67 is part of the active site. Position 96 (D96) interacts with Zn(2+). Catalysis depends on E126, which acts as the Proton acceptor. Positions 127, 155, and 340 each coordinate Zn(2+).

The protein belongs to the peptidase M20A family. DapE subfamily. In terms of assembly, homodimer. The cofactor is Zn(2+). Co(2+) serves as cofactor.

It catalyses the reaction N-succinyl-(2S,6S)-2,6-diaminopimelate + H2O = (2S,6S)-2,6-diaminopimelate + succinate. Its pathway is amino-acid biosynthesis; L-lysine biosynthesis via DAP pathway; LL-2,6-diaminopimelate from (S)-tetrahydrodipicolinate (succinylase route): step 3/3. Catalyzes the hydrolysis of N-succinyl-L,L-diaminopimelic acid (SDAP), forming succinate and LL-2,6-diaminopimelate (DAP), an intermediate involved in the bacterial biosynthesis of lysine and meso-diaminopimelic acid, an essential component of bacterial cell walls. This is Succinyl-diaminopimelate desuccinylase from Campylobacter jejuni subsp. jejuni serotype O:23/36 (strain 81-176).